The sequence spans 1291 residues: DNA-directed RNA polymerase subunit beta (1291 aa).

It belongs to the RNA polymerase beta chain family. In terms of assembly, the RNAP catalytic core consists of 2 alpha, 1 beta, 1 beta' and 1 omega subunit. When a sigma factor is associated with the core the holoenzyme is formed, which can initiate transcription.

It catalyses the reaction RNA(n) + a ribonucleoside 5'-triphosphate = RNA(n+1) + diphosphate. Its function is as follows. DNA-dependent RNA polymerase catalyzes the transcription of DNA into RNA using the four ribonucleoside triphosphates as substrates. The polypeptide is DNA-directed RNA polymerase subunit beta (Cytophaga hutchinsonii (strain ATCC 33406 / DSM 1761 / CIP 103989 / NBRC 15051 / NCIMB 9469 / D465)).